The chain runs to 139 residues: Nucleoside diphosphate kinase (139 aa).

6 residues coordinate ATP: Lys-11, Phe-59, Arg-87, Thr-93, Arg-104, and Asn-114. Catalysis depends on His-117, which acts as the Pros-phosphohistidine intermediate.

This sequence belongs to the NDK family. As to quaternary structure, homotetramer. It depends on Mg(2+) as a cofactor.

The protein resides in the cytoplasm. The enzyme catalyses a 2'-deoxyribonucleoside 5'-diphosphate + ATP = a 2'-deoxyribonucleoside 5'-triphosphate + ADP. The catalysed reaction is a ribonucleoside 5'-diphosphate + ATP = a ribonucleoside 5'-triphosphate + ADP. In terms of biological role, major role in the synthesis of nucleoside triphosphates other than ATP. The ATP gamma phosphate is transferred to the NDP beta phosphate via a ping-pong mechanism, using a phosphorylated active-site intermediate. The polypeptide is Nucleoside diphosphate kinase (Wolbachia sp. subsp. Drosophila simulans (strain wRi)).